A 674-amino-acid polypeptide reads, in one-letter code: PTS system glucose-specific EIIBCA component (674 aa).

The PTS EIIB type-1 domain occupies 1–89 (MASKLTTTSQ…LKLDGMKHFA (89 aa)). The active-site Phosphocysteine intermediate; for EIIB activity is the Cys28. The region spanning 117-476 (EFLSDTFRPI…DAERDEAKAQ (360 aa)) is the PTS EIIC type-1 domain. 10 helical membrane-spanning segments follow: residues 126 to 146 (ILWALLGASLIITLLVLADTF), 162 to 182 (YVFLHSMWRSVFYFLPIMVGA), 193 to 213 (WIGAAIPAALLTPEFLALGSA), 225 to 245 (VLNDYSGQVFPPLIAAIGLYW), 260 to 280 (MVFVPFFSLLIMIPATAFLLG), 303 to 323 (FILSIVIPLLYPFLVPLGLHW), 344 to 364 (PMGAWNFACFGLVTGVFLIAL), 376 to 396 (LGGMLAGLLGGISEPSLYGVL), 409 to 429 (GCLVGGIVMGIFDIKAYAFVF), and 442 to 462 (LGYTVGIAAAFFTSMLLVLFF). The PTS EIIA type-1 domain occupies 542–646 (DPIFAAGKLG…PLITPVVVSN (105 aa)). The Tele-phosphohistidine intermediate; for EIIA activity role is filled by His594.

It localises to the cell membrane. It carries out the reaction N(pros)-phospho-L-histidyl-[protein] + D-glucose(out) = D-glucose 6-phosphate(in) + L-histidyl-[protein]. In terms of biological role, the phosphoenolpyruvate-dependent sugar phosphotransferase system (sugar PTS), a major carbohydrate active transport system, catalyzes the phosphorylation of incoming sugar substrates concomitantly with their translocation across the cell membrane. This system is involved in glucose transport. This Corynebacterium glutamicum (Brevibacterium saccharolyticum) protein is PTS system glucose-specific EIIBCA component (ptsG).